A 409-amino-acid polypeptide reads, in one-letter code: Multifunctional CCA protein (409 aa).

Residues G8 and R11 each contribute to the ATP site. CTP contacts are provided by G8 and R11. Residues D21 and D23 each coordinate Mg(2+). Residues R91, R137, and R140 each coordinate ATP. The CTP site is built by R91, R137, and R140. In terms of domain architecture, HD spans 228 to 329 (TGAHTLSVLL…LELLQSFDVF (102 aa)).

It belongs to the tRNA nucleotidyltransferase/poly(A) polymerase family. Bacterial CCA-adding enzyme type 1 subfamily. Monomer. Can also form homodimers and oligomers. It depends on Mg(2+) as a cofactor. Ni(2+) is required as a cofactor.

The catalysed reaction is a tRNA precursor + 2 CTP + ATP = a tRNA with a 3' CCA end + 3 diphosphate. The enzyme catalyses a tRNA with a 3' CCA end + 2 CTP + ATP = a tRNA with a 3' CCACCA end + 3 diphosphate. Catalyzes the addition and repair of the essential 3'-terminal CCA sequence in tRNAs without using a nucleic acid template. Adds these three nucleotides in the order of C, C, and A to the tRNA nucleotide-73, using CTP and ATP as substrates and producing inorganic pyrophosphate. tRNA 3'-terminal CCA addition is required both for tRNA processing and repair. Also involved in tRNA surveillance by mediating tandem CCA addition to generate a CCACCA at the 3' terminus of unstable tRNAs. While stable tRNAs receive only 3'-terminal CCA, unstable tRNAs are marked with CCACCA and rapidly degraded. This is Multifunctional CCA protein from Pseudomonas fluorescens (strain ATCC BAA-477 / NRRL B-23932 / Pf-5).